The chain runs to 245 residues: Uridylate kinase (245 aa).

18 to 21 (KLSG) contributes to the ATP binding site. Residue glycine 60 participates in UMP binding. The ATP site is built by glycine 61 and arginine 65. UMP-binding positions include aspartate 80 and 141–148 (TGNPFFTT). ATP contacts are provided by threonine 168, tyrosine 174, and aspartate 177.

This sequence belongs to the UMP kinase family. In terms of assembly, homohexamer.

It localises to the cytoplasm. The enzyme catalyses UMP + ATP = UDP + ADP. The protein operates within pyrimidine metabolism; CTP biosynthesis via de novo pathway; UDP from UMP (UMPK route): step 1/1. With respect to regulation, inhibited by UTP. Its function is as follows. Catalyzes the reversible phosphorylation of UMP to UDP. This is Uridylate kinase from Pseudomonas aeruginosa (strain UCBPP-PA14).